A 122-amino-acid chain; its full sequence is Conotoxin flf14c (122 aa).

An N-terminal signal peptide occupies residues 1-22 (MGFRVLVLIVMVTTSALPFTFS). A propeptide spanning residues 23–96 (EESGRSPFRP…AESPVGQKRW (74 aa)) is cleaved from the precursor. A disordered region spans residues 53 to 89 (RADGQTPDMHQPEMRRPEMRRPEVRRPEVRQPEFAES). Positions 62–85 (HQPEMRRPEMRRPEVRRPEVRQPE) are enriched in basic and acidic residues. 2 cysteine pairs are disulfide-bonded: C101/C121 and C105/C117.

As to expression, expressed by the venom duct.

It is found in the secreted. In Conus anabathrum floridanus (Florida cone), this protein is Conotoxin flf14c.